The following is a 79-amino-acid chain: NADH-ubiquinone oxidoreductase chain 5 (79 aa).

2 helical membrane-spanning segments follow: residues 5–27 and 40–57; these read TPIM…TNPY and VMYA…FILS.

It belongs to the complex I subunit 5 family. In terms of assembly, core subunit of respiratory chain NADH dehydrogenase (Complex I) which is composed of 45 different subunits.

It is found in the mitochondrion inner membrane. The catalysed reaction is a ubiquinone + NADH + 5 H(+)(in) = a ubiquinol + NAD(+) + 4 H(+)(out). Core subunit of the mitochondrial membrane respiratory chain NADH dehydrogenase (Complex I) which catalyzes electron transfer from NADH through the respiratory chain, using ubiquinone as an electron acceptor. Essential for the catalytic activity and assembly of complex I. This Macaca fascicularis (Crab-eating macaque) protein is NADH-ubiquinone oxidoreductase chain 5 (MT-ND5).